Reading from the N-terminus, the 86-residue chain is Cerebrin prohormone (86 aa).

The first 27 residues, 1–27, serve as a signal peptide directing secretion; sequence MFGYRSLLVLLVTLSLCLLLQSSHCSA. A propeptide spanning residues 28–64 is cleaved from the precursor; the sequence is VRTYGNDLDARARREIISLAARLIKLSMYGPEDDSFV. Residue Ile-83 is modified to Isoleucine amide.

Expressed only in cerebral ganglion.

Its subcellular location is the secreted. May function as a hormone and may play a neuromodulatory role. This Aplysia californica (California sea hare) protein is Cerebrin prohormone (CBPH).